The sequence spans 245 residues: 4-hydroxy-tetrahydrodipicolinate reductase (245 aa).

Residues 7 to 12 (GAKGKV), Asp33, 75 to 77 (GTT), and 102 to 105 (APNF) each bind NAD(+). His132 (proton donor/acceptor) is an active-site residue. Residue His133 coordinates (S)-2,3,4,5-tetrahydrodipicolinate. Catalysis depends on Lys136, which acts as the Proton donor. Residue 142 to 143 (GT) participates in (S)-2,3,4,5-tetrahydrodipicolinate binding.

The protein belongs to the DapB family.

It localises to the cytoplasm. The catalysed reaction is (S)-2,3,4,5-tetrahydrodipicolinate + NAD(+) + H2O = (2S,4S)-4-hydroxy-2,3,4,5-tetrahydrodipicolinate + NADH + H(+). It catalyses the reaction (S)-2,3,4,5-tetrahydrodipicolinate + NADP(+) + H2O = (2S,4S)-4-hydroxy-2,3,4,5-tetrahydrodipicolinate + NADPH + H(+). It participates in amino-acid biosynthesis; L-lysine biosynthesis via DAP pathway; (S)-tetrahydrodipicolinate from L-aspartate: step 4/4. In terms of biological role, catalyzes the conversion of 4-hydroxy-tetrahydrodipicolinate (HTPA) to tetrahydrodipicolinate. In Mycolicibacterium paratuberculosis (strain ATCC BAA-968 / K-10) (Mycobacterium paratuberculosis), this protein is 4-hydroxy-tetrahydrodipicolinate reductase.